The sequence spans 354 residues: NADH-quinone oxidoreductase subunit H (354 aa).

Helical transmembrane passes span 22–42 (ILIR…YLIL), 91–111 (YLIA…VIPF), 124–144 (LLYV…AGWA), 168–188 (MGFA…SAIV), 203–223 (ILSW…ISGV), 255–275 (LFFL…ALMF), 291–311 (IPGF…FIWI), and 326–346 (LGWK…AIWI).

The protein belongs to the complex I subunit 1 family. In terms of assembly, NDH-1 is composed of 14 different subunits. Subunits NuoA, H, J, K, L, M, N constitute the membrane sector of the complex.

It localises to the cell inner membrane. It carries out the reaction a quinone + NADH + 5 H(+)(in) = a quinol + NAD(+) + 4 H(+)(out). Functionally, NDH-1 shuttles electrons from NADH, via FMN and iron-sulfur (Fe-S) centers, to quinones in the respiratory chain. The immediate electron acceptor for the enzyme in this species is believed to be ubiquinone. Couples the redox reaction to proton translocation (for every two electrons transferred, four hydrogen ions are translocated across the cytoplasmic membrane), and thus conserves the redox energy in a proton gradient. This subunit may bind ubiquinone. The protein is NADH-quinone oxidoreductase subunit H of Cupriavidus taiwanensis (strain DSM 17343 / BCRC 17206 / CCUG 44338 / CIP 107171 / LMG 19424 / R1) (Ralstonia taiwanensis (strain LMG 19424)).